The sequence spans 284 residues: MQQKTISLGNIDIANDKPFVLFGGMNVLESRDMAMQVCEKYVEVTQRLGVPYVFKASFDKANRSSIHSYRGPGMEEGLKIFQELKDTFGVKIITDVHEIYQCQPVAEVVDIIQLPAFLARQTDLVEAMARTGAVINVKKPQFLSPGQMGNIVEKIEECGNDKVILCDRGTNFGYDNLVVDMLGFNVMKKVSKGCPVIFDVTHSLQCRDPFGAASGGRRDQVTKLARAGMAIGLAGLFLEAHPDPNKAKCDGPSALPLSKLEAFVSQMKAIDDLVKSFEEIDTSN.

The protein belongs to the KdsA family.

Its subcellular location is the cytoplasm. It carries out the reaction D-arabinose 5-phosphate + phosphoenolpyruvate + H2O = 3-deoxy-alpha-D-manno-2-octulosonate-8-phosphate + phosphate. It participates in carbohydrate biosynthesis; 3-deoxy-D-manno-octulosonate biosynthesis; 3-deoxy-D-manno-octulosonate from D-ribulose 5-phosphate: step 2/3. The protein operates within bacterial outer membrane biogenesis; lipopolysaccharide biosynthesis. This is 2-dehydro-3-deoxyphosphooctonate aldolase from Glaesserella parasuis serovar 5 (strain SH0165) (Haemophilus parasuis).